A 454-amino-acid chain; its full sequence is MELKGKKVLVAGLGVSGIALCKVLDSLKAKVIAYDEKEYDVLKENLEEIKSLSIDFRFGKFKKEFLEGVDLIVLSPGVPIDSDIVKTAQEKKIELLGEVEFAYRFSKAPIYAITGTNGKTTTTSLLGEMFKNTGRKVYVAGNIGYPLIYAVMEAAEDDFIVAEISSFQLETIKEFKPKISCIINITPDHLDRHKTFENYRDIKGRIFENQREDEYTVLNYDDPVTWSLKNKAKCRVFPFSRKSLLENGAYIKDGSIYISVNGNAEKIIDIEEIYIPGEHNLENALAASSVAYLSGISADVIANTLKTFKGVEHRIEFVDEINGVKFYNDSKGTNPDASIKAIQALKTPIVLIAGGYDKGSEFDEFVKAFNGKVKKLILIGQTAKKIRDTARKYSYPEDDILFAGTLEEAVKKAYESAKEGDSVLLSPACASWDMFRNFEERGRIFKKAVAELRR.

ATP is bound at residue 115–121; that stretch reads GTNGKTT.

The protein belongs to the MurCDEF family.

Its subcellular location is the cytoplasm. The catalysed reaction is UDP-N-acetyl-alpha-D-muramoyl-L-alanine + D-glutamate + ATP = UDP-N-acetyl-alpha-D-muramoyl-L-alanyl-D-glutamate + ADP + phosphate + H(+). It functions in the pathway cell wall biogenesis; peptidoglycan biosynthesis. Functionally, cell wall formation. Catalyzes the addition of glutamate to the nucleotide precursor UDP-N-acetylmuramoyl-L-alanine (UMA). This Thermoanaerobacter sp. (strain X514) protein is UDP-N-acetylmuramoylalanine--D-glutamate ligase.